The sequence spans 388 residues: AT-rich binding protein (388 aa).

The C2H2-type 1 zinc-finger motif lies at Ile-29–His-52. Low complexity-rich tracts occupy residues Gln-138–Gln-165 and Val-249–Pro-265. 2 disordered regions span residues Gln-138–Val-168 and Pro-240–Pro-265. 2 consecutive C2H2-type zinc fingers follow at residues Tyr-321–His-345 and Phe-351–His-374.

The protein resides in the nucleus. In terms of biological role, may be a transcription factor for genes having (A+T) stretches in their promoter and/or enhancer regions. Binds to AT rich DNA. This is AT-rich binding protein from Drosophila melanogaster (Fruit fly).